We begin with the raw amino-acid sequence, 220 residues long: MDRMEEPPDVVIRRLPLYARSLRYLLQEGVESVSSQELGDRINVTAAQIRKDLSYFGEFGKQGIGYNVRKLLQQIEDILGLTREWPVAVVGIGHLGEAIARYEGFRQQGIRIAGLFDSNPSKIGTVIDGMTVQSIEEADRIIREQGIRLAIIAVPARSAQEVTDRLVMAGVRAILSYAPTVLQVPDGVWVRYIDPVAILHSMTYYLARDINSARHNSPES.

The H-T-H motif DNA-binding region spans 17 to 56 (LYARSLRYLLQEGVESVSSQELGDRINVTAAQIRKDLSYF). 91–96 (GIGHLG) is an NAD(+) binding site.

It belongs to the transcriptional regulatory Rex family. Homodimer.

The protein localises to the cytoplasm. Its function is as follows. Modulates transcription in response to changes in cellular NADH/NAD(+) redox state. The chain is Redox-sensing transcriptional repressor Rex from Roseiflexus sp. (strain RS-1).